Here is a 229-residue protein sequence, read N- to C-terminus: Cytidylate kinase (229 aa).

ATP is bound at residue 12 to 20 (GPSGTGKSS).

The protein belongs to the cytidylate kinase family. Type 1 subfamily.

It is found in the cytoplasm. It catalyses the reaction CMP + ATP = CDP + ADP. The catalysed reaction is dCMP + ATP = dCDP + ADP. The sequence is that of Cytidylate kinase from Rhodococcus opacus (strain B4).